We begin with the raw amino-acid sequence, 203 residues long: tRNA (pseudouridine(54)-N(1))-methyltransferase (203 aa).

S-adenosyl-L-methionine contacts are provided by leucine 135 and glycine 156.

This sequence belongs to the methyltransferase superfamily. TrmY family. As to quaternary structure, homodimer.

It is found in the cytoplasm. The enzyme catalyses pseudouridine(54) in tRNA + S-adenosyl-L-methionine = N(1)-methylpseudouridine(54) in tRNA + S-adenosyl-L-homocysteine + H(+). Specifically catalyzes the N1-methylation of pseudouridine at position 54 (Psi54) in tRNAs. The sequence is that of tRNA (pseudouridine(54)-N(1))-methyltransferase from Thermococcus onnurineus (strain NA1).